A 284-amino-acid polypeptide reads, in one-letter code: 2-dehydro-3-deoxyphosphooctonate aldolase (284 aa).

It belongs to the KdsA family.

The protein resides in the cytoplasm. The enzyme catalyses D-arabinose 5-phosphate + phosphoenolpyruvate + H2O = 3-deoxy-alpha-D-manno-2-octulosonate-8-phosphate + phosphate. It participates in carbohydrate biosynthesis; 3-deoxy-D-manno-octulosonate biosynthesis; 3-deoxy-D-manno-octulosonate from D-ribulose 5-phosphate: step 2/3. It functions in the pathway bacterial outer membrane biogenesis; lipopolysaccharide biosynthesis. The protein is 2-dehydro-3-deoxyphosphooctonate aldolase of Histophilus somni (strain 2336) (Haemophilus somnus).